The sequence spans 92 residues: MAVKIRLKRMGAKRDPFYRIVVSDARSPRDGRFIEQIGYYDPLEEPARISVDEAKARVWLQQGAQMTETVRSLFKKSGVLERLGAERAEERG.

The protein belongs to the bacterial ribosomal protein bS16 family.

In Desulforudis audaxviator (strain MP104C), this protein is Small ribosomal subunit protein bS16.